The primary structure comprises 403 residues: Phosphoglycerate kinase (403 aa).

Residues Asp-21–Asn-23, Arg-36, His-59–Arg-62, Arg-119, and Arg-159 contribute to the substrate site. ATP-binding positions include Lys-214, Gly-301, Glu-332, and Gly-359–Ser-362.

The protein belongs to the phosphoglycerate kinase family. Monomer.

Its subcellular location is the cytoplasm. It carries out the reaction (2R)-3-phosphoglycerate + ATP = (2R)-3-phospho-glyceroyl phosphate + ADP. Its pathway is carbohydrate degradation; glycolysis; pyruvate from D-glyceraldehyde 3-phosphate: step 2/5. This chain is Phosphoglycerate kinase, found in Lactobacillus delbrueckii subsp. lactis.